The chain runs to 310 residues: p-hydroxybenzoic acid efflux pump subunit AaeA (310 aa).

A helical membrane pass occupies residues 12–32; that stretch reads VITLLLVIIAIVLIFRIWVFY.

The protein belongs to the membrane fusion protein (MFP) (TC 8.A.1) family.

The protein localises to the cell inner membrane. Forms an efflux pump with AaeB. The polypeptide is p-hydroxybenzoic acid efflux pump subunit AaeA (Erwinia tasmaniensis (strain DSM 17950 / CFBP 7177 / CIP 109463 / NCPPB 4357 / Et1/99)).